The following is a 246-amino-acid chain: MyoD family inhibitor (246 aa).

2 disordered regions span residues 1–76 and 91–151; these read MYQV…LDST and GNPL…SKST. Low complexity predominate over residues 14-26; the sequence is APYGAPSAAPGPA. The region spanning 99–246 is the MDFI domain; the sequence is LLPNDSGHPS…MECCGLCFSS (148 aa).

Belongs to the MDFI family. As to quaternary structure, interacts (via C-terminus) with AXIN1 and LEF1. Interacts with CCNT2. Interacts (via C-terminus) with Piezo channel composed of PIEZO1 or PIEZO2; the interaction prolongs Piezo channel inactivation.

The protein resides in the nucleus. It is found in the cytoplasm. Functionally, inhibits the transactivation activity of the Myod family of myogenic factors and represses myogenesis. Acts by associating with Myod family members and retaining them in the cytoplasm by masking their nuclear localization signals. Can also interfere with the DNA-binding activity of Myod family members. Plays an important role in trophoblast and chondrogenic differentiation. Regulates the transcriptional activity of TCF7L1/TCF3 by interacting directly with TCF7L1/TCF3 and preventing it from binding DNA. Binds to the axin complex, resulting in an increase in the level of free beta-catenin. Affects axin regulation of the WNT and JNK signaling pathways. Regulates the activity of mechanosensitive Piezo channel. This is MyoD family inhibitor (MDFI) from Homo sapiens (Human).